The following is a 195-amino-acid chain: MSRTATIKRDTFETQIELTLDLDEQTPIKVDTGIGYIDHMLTLFAKHGRFGLQVDVKGDLQVDSHHTTEDIGIVLGEAFTQALGDKVGIERYGAQFVPMDETLTRAVIDLSGRSYLVLHAELTAPTLGTFETEVVEDFWQGFADQARANVHIEVLYGRNTHHKIESMFKAVGRAMRQAITINPEIKGVNSTKGRI.

The protein belongs to the imidazoleglycerol-phosphate dehydratase family.

It localises to the cytoplasm. The enzyme catalyses D-erythro-1-(imidazol-4-yl)glycerol 3-phosphate = 3-(imidazol-4-yl)-2-oxopropyl phosphate + H2O. The protein operates within amino-acid biosynthesis; L-histidine biosynthesis; L-histidine from 5-phospho-alpha-D-ribose 1-diphosphate: step 6/9. This chain is Imidazoleglycerol-phosphate dehydratase, found in Leuconostoc mesenteroides subsp. mesenteroides (strain ATCC 8293 / DSM 20343 / BCRC 11652 / CCM 1803 / JCM 6124 / NCDO 523 / NBRC 100496 / NCIMB 8023 / NCTC 12954 / NRRL B-1118 / 37Y).